A 106-amino-acid chain; its full sequence is ATP-dependent Clp protease adapter protein ClpS (106 aa).

Belongs to the ClpS family. As to quaternary structure, binds to the N-terminal domain of the chaperone ClpA.

Functionally, involved in the modulation of the specificity of the ClpAP-mediated ATP-dependent protein degradation. This chain is ATP-dependent Clp protease adapter protein ClpS, found in Serratia proteamaculans (strain 568).